The sequence spans 517 residues: Synaptic vesicular amine transporter (517 aa).

Topologically, residues 1 to 20 (MALSELALLRRLQESRHSRK) are cytoplasmic. The chain crosses the membrane as a helical span at residues 21–41 (LILFIVFLALLLDNMLLTVVV). The Extracellular segment spans residues 42–132 (PIIPSYLYSI…EDKDLLNENV (91 aa)). Residues N84, N91, and N112 are each glycosylated (N-linked (GlcNAc...) asparagine). Cysteines 120 and 327 form a disulfide. Residues 133–153 (QVGLLFASKATVQLLTNPFIG) form a helical membrane-spanning segment. Topologically, residues 154–162 (LLTNRIGYP) are cytoplasmic. The helical transmembrane segment at 163–183 (IPMFTGFCIMFISTVMFAFSR) threads the bilayer. Topologically, residues 184–192 (TYAFLLIAR) are extracellular. The helical transmembrane segment at 193-213 (SLQGIGSSCSSVAGMGMLASV) threads the bilayer. Residues 214–222 (YTDDEERGN) are Cytoplasmic-facing. A helical transmembrane segment spans residues 223–245 (AMGIALGGLAMGVLVGPPFGSVL). L231 and V235 together coordinate serotonin. The Extracellular portion of the chain corresponds to 246–251 (YEFVGK). The helical transmembrane segment at 252–274 (TAPFLVLAALVLLDGAIQLFVLQ) threads the bilayer. Over 275–294 (PSRVQPESQKGTPLTTLLRD) the chain is Cytoplasmic. Residues 295–314 (PYILIAAGSICFANMGIAML) form a helical membrane-spanning segment. The serotonin site is built by N308, I311, E315, F337, and Y344. At 315–331 (EPALPIWMMETMCSHKW) the chain is on the extracellular side. A helical transmembrane segment spans residues 332–355 (QLGVAFLPASVSYLIGTNVFGILA). At 356-360 (HKMGR) the chain is on the cytoplasmic side. Residues 361-381 (WLCALLGMIIVGMSILCIPLA) form a helical membrane-spanning segment. The Extracellular segment spans residues 382-392 (KNIYGLIAPNF). A helical membrane pass occupies residues 393 to 413 (GVGFAIGMVDSSMMPIMGYLV). A serotonin-binding site is contributed by D402. Residues 414–417 (DLRH) are Cytoplasmic-facing. Residues 418-438 (VSVYGSVYAIADVAFCMGYAI) form a helical membrane-spanning segment. A serotonin-binding site is contributed by Y436. The Extracellular portion of the chain corresponds to 439-443 (GPSAG). A helical transmembrane segment spans residues 444–465 (GAIAKAIGFPWLMTIIGIIDIL). Residues 466–517 (FAPLCFFLRSPPAKEEKMAILMDHNCPIKTKMYTQNSSQSHPIGEDEESESD) lie on the Cytoplasmic side of the membrane. Phosphoserine; by CK2 is present on residues S514 and S516.

It belongs to the major facilitator superfamily. Vesicular transporter family. Interacts with SLC6A3.

The protein localises to the cytoplasmic vesicle. It is found in the secretory vesicle. Its subcellular location is the synaptic vesicle membrane. The protein resides in the secretory vesicle membrane. It localises to the cell projection. The protein localises to the axon. It is found in the dendrite. It catalyses the reaction serotonin(in) + 2 H(+)(out) = serotonin(out) + 2 H(+)(in). It carries out the reaction dopamine(in) + 2 H(+)(out) = dopamine(out) + 2 H(+)(in). The catalysed reaction is histamine(in) + 2 H(+)(out) = histamine(out) + 2 H(+)(in). Strongly inhibited by reserpine and tetrabenazine. Also inhibited to a lesser extent by ketanserin and fenfluramine. Reserpine and ketanserin inhibit by blocking the substrate-binding pocket. Tetrabenazine traps SLC18A2/VMAT2 in an occluded conformation and its inhibition is specific to SLC18A2/VMAT2 but not SLC18A1/VMAT1. Its function is as follows. Electrogenic antiporter that exchanges one cationic monoamine with two intravesicular protons across the membrane of secretory and synaptic vesicles. Uses the electrochemical proton gradient established by the V-type proton-pump ATPase to accumulate high concentrations of monoamines inside the vesicles prior to their release via exocytosis. Transports a variety of catecholamines such as dopamine, adrenaline and noradrenaline, histamine, and indolamines such as serotonin. Regulates the transvesicular monoaminergic gradient that determines the quantal size. Mediates somatodendritic dopamine release in hippocampal neurons, likely as part of a regulated secretory pathway that integrates retrograde synaptic signals. Acts as a primary transporter for striatal dopamine loading ensuring impulse-dependent release of dopamine at the synaptic cleft. Responsible for histamine and serotonin storage and subsequent corelease from mast cell granules. The protein is Synaptic vesicular amine transporter (SLC18A2) of Bos taurus (Bovine).